Reading from the N-terminus, the 1322-residue chain is Flocculation protein FLO9 (1322 aa).

A signal peptide spans Met1–Ala24. Residues Gly74–Gly249 form the PA14 domain. N-linked (GlcNAc...) asparagine glycans are attached at residues Asn135, Asn187, Asn203, Asn257, Asn262, and Asn270. Residues Asn197–Gly240 are sugar recognition. 13 repeat units span residues Thr278–Ile322, Thr323–Ile367, Thr368–Met412, Thr413–Met457, Thr458–Met502, Thr503–Met547, Thr548–Ile592, Thr593–Ile637, Thr638–Met682, Thr683–Met727, Thr728–Ser772, Thr773–Thr817, and Thr818–Ser862. The segment at Thr278–Ser862 is 13 X 45 AA approximate tandem repeats, Thr-rich. N-linked (GlcNAc...) asparagine glycosylation is present at Asn329. N-linked (GlcNAc...) asparagine glycans are attached at residues Asn419, Asn464, Asn509, Asn554, Asn599, Asn644, Asn689, and Asn734. Disordered stretches follow at residues Leu770 to Pro799 and Val816 to Gln843. Low complexity-rich tracts occupy residues Thr773–Thr795 and Thr817–Thr840. Asn888 is a glycosylation site (N-linked (GlcNAc...) asparagine). 3 consecutive repeat copies span residues Val892–Leu906, Val907–Pro921, and Val922–Thr936. The interval Val892–Thr936 is 3 X 15 AA approximate repeats, Ser-rich. Over residues Ser950 to Ser1001 the composition is skewed to low complexity. The segment at Ser950 to Glu1018 is disordered. The span at Gln1002–Glu1018 shows a compositional bias: polar residues. A run of 3 repeats spans residues Thr1013–Ser1063, Thr1085–Ser1135, and Thr1136–Thr1186. Residues Thr1013–Thr1186 form a 3 X 51 AA approximate repeats, Thr-rich region. Residues Thr1186–Met1196 are compositionally biased toward polar residues. Disordered stretches follow at residues Thr1186–Thr1221 and Ser1256–Met1284. A compositionally biased stretch (low complexity) spans Asn1197–Thr1221. A compositionally biased stretch (polar residues) spans Glu1257–Met1284. Gly1299 carries GPI-anchor amidated glycine lipidation. A propeptide spans Ser1300–Ile1322 (removed in mature form).

It belongs to the flocculin family. Post-translationally, the GPI-anchor is attached to the protein in the endoplasmic reticulum and serves to target the protein to the cell surface. There, the glucosamine-inositol phospholipid moiety is cleaved off and the GPI-modified mannoprotein is covalently attached via its lipidless GPI glycan remnant to the 1,6-beta-glucan of the outer cell wall layer.

The protein resides in the secreted. It is found in the cell wall. Its subcellular location is the membrane. Cell wall protein that participates directly in adhesive cell-cell interactions during yeast flocculation, a reversible, asexual and Ca(2+)-dependent process in which cells adhere to form aggregates (flocs) consisting of thousands of cells. The lectin-like protein sticks out of the cell wall of flocculent cells and selectively binds mannose residues in the cell walls of adjacent cells. In Saccharomyces cerevisiae (strain ATCC 204508 / S288c) (Baker's yeast), this protein is Flocculation protein FLO9 (FLO9).